A 294-amino-acid polypeptide reads, in one-letter code: N-acetylmuramic acid 6-phosphate etherase (294 aa).

The 164-residue stretch at 56-219 (TSQALKKGGR…STLSMVSVGK (164 aa)) folds into the SIS domain. Glu-84 functions as the Proton donor in the catalytic mechanism. Glu-115 is an active-site residue.

This sequence belongs to the GCKR-like family. MurNAc-6-P etherase subfamily. Homodimer.

It catalyses the reaction N-acetyl-D-muramate 6-phosphate + H2O = N-acetyl-D-glucosamine 6-phosphate + (R)-lactate. It participates in amino-sugar metabolism; 1,6-anhydro-N-acetylmuramate degradation. Its pathway is amino-sugar metabolism; N-acetylmuramate degradation. It functions in the pathway cell wall biogenesis; peptidoglycan recycling. Specifically catalyzes the cleavage of the D-lactyl ether substituent of MurNAc 6-phosphate, producing GlcNAc 6-phosphate and D-lactate. Together with AnmK, is also required for the utilization of anhydro-N-acetylmuramic acid (anhMurNAc) either imported from the medium or derived from its own cell wall murein, and thus plays a role in cell wall recycling. This is N-acetylmuramic acid 6-phosphate etherase from Francisella philomiragia subsp. philomiragia (strain ATCC 25017 / CCUG 19701 / FSC 153 / O#319-036).